The primary structure comprises 203 residues: GTP cyclohydrolase-2 (203 aa).

49-53 (RIHSE) contributes to the GTP binding site. The Zn(2+) site is built by cysteine 54, cysteine 65, and cysteine 67. GTP contacts are provided by residues glutamine 70, 92–94 (EGR), and threonine 114. The Proton acceptor role is filled by aspartate 126. The Nucleophile role is filled by arginine 128. The GTP site is built by threonine 149 and lysine 154.

This sequence belongs to the GTP cyclohydrolase II family. It depends on Zn(2+) as a cofactor.

The enzyme catalyses GTP + 4 H2O = 2,5-diamino-6-hydroxy-4-(5-phosphoribosylamino)-pyrimidine + formate + 2 phosphate + 3 H(+). Its pathway is cofactor biosynthesis; riboflavin biosynthesis; 5-amino-6-(D-ribitylamino)uracil from GTP: step 1/4. In terms of biological role, catalyzes the conversion of GTP to 2,5-diamino-6-ribosylamino-4(3H)-pyrimidinone 5'-phosphate (DARP), formate and pyrophosphate. This is GTP cyclohydrolase-2 from Shewanella sp. (strain W3-18-1).